Here is a 215-residue protein sequence, read N- to C-terminus: MKTLSERLNHALQLTGVTQSELARRIGIKQQSISQICSGKSARSRYTMQIAEALRVNAHWLATGDGEIGLGVGNVEVGPDIKGRIPLINWVQAGDWTEIAEGFAHEDAEEWREVTGKAHEGCFALRVKGDSMENPSGKKSIPEGAVIVVDPELPYSSGSLVVARLDDSKEATFKQLVIDGEQKYLKPLNPQYPAIPINGNCTIIGVVRQAIIDFW.

One can recognise an HTH cro/C1-type domain in the interval Leu-8–Leu-61. The H-T-H motif DNA-binding region spans Gln-19–Ser-38.

Its function is as follows. May control the expression of the integrase and inhibit excision of the mobile element R391, and regulate the expression of other genes as well. In Providencia rettgeri, this protein is HTH-type transcriptional regulator for conjugative element R391.